We begin with the raw amino-acid sequence, 427 residues long: Adenylosuccinate synthetase (427 aa).

GTP is bound by residues 12-18 and 40-42; these read GDEGKGK and GHT. D13 functions as the Proton acceptor in the catalytic mechanism. D13 and G40 together coordinate Mg(2+). Residues 13 to 16, 38 to 41, T128, R142, Q223, T238, and R302 each bind IMP; these read DEGK and NAGH. H41 acts as the Proton donor in catalysis. A substrate-binding site is contributed by 298–304; the sequence is TTTGRPR. Residues R304, 330–332, and 412–414 contribute to the GTP site; these read SID and SVG.

This sequence belongs to the adenylosuccinate synthetase family. In terms of assembly, homodimer. Mg(2+) is required as a cofactor.

Its subcellular location is the cytoplasm. It catalyses the reaction IMP + L-aspartate + GTP = N(6)-(1,2-dicarboxyethyl)-AMP + GDP + phosphate + 2 H(+). It functions in the pathway purine metabolism; AMP biosynthesis via de novo pathway; AMP from IMP: step 1/2. Its function is as follows. Plays an important role in the de novo pathway of purine nucleotide biosynthesis. Catalyzes the first committed step in the biosynthesis of AMP from IMP. This chain is Adenylosuccinate synthetase, found in Staphylococcus saprophyticus subsp. saprophyticus (strain ATCC 15305 / DSM 20229 / NCIMB 8711 / NCTC 7292 / S-41).